The following is a 684-amino-acid chain: Threonine--tRNA ligase (684 aa).

In terms of domain architecture, TGS spans 1–60 (MSISITLHRSGTSRTQQVDTTTTGLDLFGSDRAVVAMRVDGNLVDLQRELHDGAEVEPVE). The tract at residues 256-567 (DHRKLGAELD…LTEHYAGAFP (312 aa)) is catalytic. The Zn(2+) site is built by Cys-361, His-412, and His-544.

This sequence belongs to the class-II aminoacyl-tRNA synthetase family. As to quaternary structure, homodimer. It depends on Zn(2+) as a cofactor.

Its subcellular location is the cytoplasm. It catalyses the reaction tRNA(Thr) + L-threonine + ATP = L-threonyl-tRNA(Thr) + AMP + diphosphate + H(+). In terms of biological role, catalyzes the attachment of threonine to tRNA(Thr) in a two-step reaction: L-threonine is first activated by ATP to form Thr-AMP and then transferred to the acceptor end of tRNA(Thr). Also edits incorrectly charged L-seryl-tRNA(Thr). The sequence is that of Threonine--tRNA ligase from Cutibacterium acnes (strain DSM 16379 / KPA171202) (Propionibacterium acnes).